The chain runs to 109 residues: Spermidine export protein MdtI (109 aa).

The next 4 membrane-spanning stretches (helical) occupy residues 6–26 (FYPI…NILL), 36–56 (WLGI…AQAV), 64–84 (AYAM…WILF), and 88–108 (LNYK…MIKL).

It belongs to the drug/metabolite transporter (DMT) superfamily. Small multidrug resistance (SMR) (TC 2.A.7.1) family. MdtI subfamily. As to quaternary structure, forms a complex with MdtJ.

The protein resides in the cell inner membrane. Functionally, catalyzes the excretion of spermidine. The protein is Spermidine export protein MdtI of Yersinia pseudotuberculosis serotype I (strain IP32953).